Here is a 177-residue protein sequence, read N- to C-terminus: PLAC8-like protein 1 (177 aa).

Belongs to the cornifelin family.

The protein is PLAC8-like protein 1 (Plac8l1) of Mus musculus (Mouse).